We begin with the raw amino-acid sequence, 160 residues long: Transcriptional repressor NrdR (160 aa).

A zinc finger spans residues 3–34 (CPACNYNGTKVLDSRPVQDFGSIRRRRECESC). Residues 49-139 (LIIVKKDGTR…VYKQFKDINV (91 aa)) form the ATP-cone domain.

The protein belongs to the NrdR family. Zn(2+) serves as cofactor.

Negatively regulates transcription of bacterial ribonucleotide reductase nrd genes and operons by binding to NrdR-boxes. The polypeptide is Transcriptional repressor NrdR (Exiguobacterium sibiricum (strain DSM 17290 / CCUG 55495 / CIP 109462 / JCM 13490 / 255-15)).